Here is a 176-residue protein sequence, read N- to C-terminus: Large ribosomal subunit protein uL6 (176 aa).

Belongs to the universal ribosomal protein uL6 family. As to quaternary structure, part of the 50S ribosomal subunit.

In terms of biological role, this protein binds to the 23S rRNA, and is important in its secondary structure. It is located near the subunit interface in the base of the L7/L12 stalk, and near the tRNA binding site of the peptidyltransferase center. The chain is Large ribosomal subunit protein uL6 from Paraburkholderia xenovorans (strain LB400).